Consider the following 509-residue polypeptide: DAP3-binding cell death enhancer 1 (509 aa).

Residues 1-23 constitute a mitochondrion transit peptide; sequence MWRLTGILGRALPRLLGPGFRGI. Disordered stretches follow at residues 19 to 60 and 143 to 185; these read GFRG…RNRD and VLPS…PGLL. The propeptide at 24–101 is extended MTS; the sequence is TPKPTSSDGP…AVLALHLARQ (78 aa). A compositionally biased stretch (polar residues) spans 26-40; the sequence is KPTSSDGPQTTSTTL. Composition is skewed to basic and acidic residues over residues 46–60 and 156–168; these read NFDR…RNRD and GLRE…EEPA. 7 TPR repeats span residues 213–245, 246–278, 279–313, 314–351, 352–385, 386–423, and 470–498; these read AGPP…QLSV, AIAF…RGYS, KAQY…VQGH, SLAQ…DSGL, TEAQ…SNGD, SQSR…GNEP, and ASST…AMPS. The short motif at 307-326 is the SIFI-degron element; that stretch reads LAAVQGHSLAQYRYARCLLQ.

This sequence belongs to the DELE1 family. Interacts with DAP3. As to quaternary structure, interacts (via TPR repeats) with EIF2AK1/HRI; activating the protein kinase activity of EIF2AK1/HRI, thereby promoting the integrated stress response (ISR). In terms of assembly, homooctamer; oligomerization is required to activate EIF2AK1/HRI. Interacts (via TPR repeats) with EIF2AK1/HRI; activating the protein kinase activity of EIF2AK1/HRI, thereby promoting the integrated stress response (ISR). Post-translationally, unstable protein in absence of stress: imported in the mitochondrial matrix following processing by the mitochondrial-processing peptidase (MPP), where it is degraded by LONP1. Stabilized in response to iron deficiency: iron deficiency impairs mitochondrial import, promoting localization at the mitochondrial surface and stabilization. Cleaved by OMA1 in response to mitochondrial stress, generating the DAP3-binding cell death enhancer 1 short form (DELE1(S) or S-DELE1) that accumulates in the cytosol and activates the protein kinase activity of EIF2AK1/HRI. Protein cleavage by OMA1 can take place at different positions, and apparently does not require a specific sequence motif. In terms of processing, ubiquitinated and degraded by the SIFI complex once the mitochondrial stress has been resolved, thereby providing stress response silencing. Within the SIFI complex, UBR4 initiates ubiquitin chain that are further elongated or branched by KCMF1.

It localises to the mitochondrion. The protein localises to the mitochondrion outer membrane. The protein resides in the mitochondrion inner membrane. Its subcellular location is the cytoplasm. It is found in the cytosol. Protein kinase activator that acts as a key activator of the integrated stress response (ISR) following various stresses, such as iron deficiency, mitochondrial stress or mitochondrial DNA breaks. Detects impaired protein import and processing in mitochondria, activating the ISR. May also required for the induction of death receptor-mediated apoptosis through the regulation of caspase activation. In terms of biological role, protein kinase activator that activates the ISR in response to iron deficiency: iron deficiency impairs mitochondrial import, promoting DELE1 localization at the mitochondrial surface, where it binds and activates EIF2AK1/HRI to trigger the ISR. Its function is as follows. Protein kinase activator generated by protein cleavage in response to mitochondrial stress, which accumulates in the cytosol and specifically binds to and activates the protein kinase activity of EIF2AK1/HRI. It thereby activates the integrated stress response (ISR): EIF2AK1/HRI activation promotes eIF-2-alpha (EIF2S1) phosphorylation, leading to a decrease in global protein synthesis and the induction of selected genes, including the transcription factor ATF4, the master transcriptional regulator of the ISR. Also acts as an activator of PRKN-independent mitophagy: activates the protein kinase activity of EIF2AK1/HRI in response to mitochondrial damage, promoting eIF-2-alpha (EIF2S1) phosphorylation, leading to mitochondrial localization of EIF2S1 followed by induction of mitophagy. The polypeptide is DAP3-binding cell death enhancer 1 (Rattus norvegicus (Rat)).